The primary structure comprises 288 residues: Protease HtpX (288 aa).

Transmembrane regions (helical) follow at residues 4–24 and 36–56; these read VMLF…VLNI and LSGL…ISLM. Residue H143 coordinates Zn(2+). The active site involves E144. Residue H147 participates in Zn(2+) binding. The next 2 helical transmembrane spans lie at 151 to 171 and 193 to 213; these read GDMV…IFLS and MVYF…ASFI. A Zn(2+)-binding site is contributed by E222.

Belongs to the peptidase M48B family. Zn(2+) serves as cofactor.

It localises to the cell inner membrane. The sequence is that of Protease HtpX from Vibrio vulnificus (strain YJ016).